Here is a 363-residue protein sequence, read N- to C-terminus: Serpentine receptor class T-55 (363 aa).

Residues Met-1 to Ser-18 form the signal peptide. 7 helical membrane-spanning segments follow: residues Ile-70 to Phe-90, Val-107 to Val-127, Ile-143 to Gly-163, Trp-187 to Phe-207, Phe-231 to Cys-251, Ile-278 to Pro-298, and Phe-303 to Ile-323.

It belongs to the nematode receptor-like protein srt family.

It localises to the membrane. The polypeptide is Serpentine receptor class T-55 (srt-55) (Caenorhabditis elegans).